A 243-amino-acid chain; its full sequence is Uroporphyrinogen-III C-methyltransferase (243 aa).

S-adenosyl-L-homocysteine-binding positions include proline 12, serine 88–aspartate 90, serine 118–threonine 119, methionine 166, and alanine 195.

Belongs to the precorrin methyltransferase family.

The enzyme catalyses uroporphyrinogen III + 2 S-adenosyl-L-methionine = precorrin-2 + 2 S-adenosyl-L-homocysteine + H(+). It participates in cofactor biosynthesis; adenosylcobalamin biosynthesis; precorrin-2 from uroporphyrinogen III: step 1/1. It functions in the pathway porphyrin-containing compound metabolism; siroheme biosynthesis; precorrin-2 from uroporphyrinogen III: step 1/1. Functionally, catalyzes the two successive C-2 and C-7 methylation reactions involved in the conversion of uroporphyrinogen III to precorrin-2 via the intermediate formation of precorrin-1. It is a step in the biosynthesis of both cobalamin (vitamin B12) and siroheme. This chain is Uroporphyrinogen-III C-methyltransferase, found in Synechococcus elongatus (strain ATCC 33912 / PCC 7942 / FACHB-805) (Anacystis nidulans R2).